Here is a 572-residue protein sequence, read N- to C-terminus: Proline--tRNA ligase (572 aa).

The protein belongs to the class-II aminoacyl-tRNA synthetase family. ProS type 1 subfamily. Homodimer.

It localises to the cytoplasm. The catalysed reaction is tRNA(Pro) + L-proline + ATP = L-prolyl-tRNA(Pro) + AMP + diphosphate. Catalyzes the attachment of proline to tRNA(Pro) in a two-step reaction: proline is first activated by ATP to form Pro-AMP and then transferred to the acceptor end of tRNA(Pro). As ProRS can inadvertently accommodate and process non-cognate amino acids such as alanine and cysteine, to avoid such errors it has two additional distinct editing activities against alanine. One activity is designated as 'pretransfer' editing and involves the tRNA(Pro)-independent hydrolysis of activated Ala-AMP. The other activity is designated 'posttransfer' editing and involves deacylation of mischarged Ala-tRNA(Pro). The misacylated Cys-tRNA(Pro) is not edited by ProRS. This Photorhabdus laumondii subsp. laumondii (strain DSM 15139 / CIP 105565 / TT01) (Photorhabdus luminescens subsp. laumondii) protein is Proline--tRNA ligase.